A 100-amino-acid chain; its full sequence is Small ribosomal subunit protein uS14c (100 aa).

Belongs to the universal ribosomal protein uS14 family. In terms of assembly, part of the 30S ribosomal subunit.

It is found in the plastid. Functionally, binds 16S rRNA, required for the assembly of 30S particles. In Epifagus virginiana (Beechdrops), this protein is Small ribosomal subunit protein uS14c.